We begin with the raw amino-acid sequence, 121 residues long: Large ribosomal subunit protein bL12 (121 aa).

It belongs to the bacterial ribosomal protein bL12 family. In terms of assembly, homodimer. Part of the ribosomal stalk of the 50S ribosomal subunit. Forms a multimeric L10(L12)X complex, where L10 forms an elongated spine to which 2 to 4 L12 dimers bind in a sequential fashion. Binds GTP-bound translation factors.

Functionally, forms part of the ribosomal stalk which helps the ribosome interact with GTP-bound translation factors. Is thus essential for accurate translation. The protein is Large ribosomal subunit protein bL12 of Pseudomonas syringae pv. tomato (strain ATCC BAA-871 / DC3000).